We begin with the raw amino-acid sequence, 432 residues long: Enolase (432 aa).

Position 164 (glutamine 164) interacts with (2R)-2-phosphoglycerate. The Proton donor role is filled by glutamate 206. Aspartate 243, glutamate 284, and aspartate 311 together coordinate Mg(2+). Lysine 336, arginine 365, serine 366, and lysine 387 together coordinate (2R)-2-phosphoglycerate. Catalysis depends on lysine 336, which acts as the Proton acceptor.

The protein belongs to the enolase family. It depends on Mg(2+) as a cofactor.

The protein resides in the cytoplasm. Its subcellular location is the secreted. The protein localises to the cell surface. The catalysed reaction is (2R)-2-phosphoglycerate = phosphoenolpyruvate + H2O. It functions in the pathway carbohydrate degradation; glycolysis; pyruvate from D-glyceraldehyde 3-phosphate: step 4/5. In terms of biological role, catalyzes the reversible conversion of 2-phosphoglycerate (2-PG) into phosphoenolpyruvate (PEP). It is essential for the degradation of carbohydrates via glycolysis. The protein is Enolase of Synechococcus sp. (strain JA-3-3Ab) (Cyanobacteria bacterium Yellowstone A-Prime).